The following is a 906-amino-acid chain: Formin-like protein 16 (906 aa).

The signal sequence occupies residues 1 to 28 (MAPAPSPTPLPLFLLLLLLVGVAPLAAA). The disordered stretch occupies residues 34–76 (QTRFPSTRTPAFATPPPITSPSPSPGTPTATPSSSPPSSSGKR). Residues 46–59 (ATPPPITSPSPSPG) are compositionally biased toward pro residues. Residues 60–73 (TPTATPSSSPPSSS) show a composition bias toward low complexity. A helical transmembrane segment spans residues 81–101 (VAVVSTALSSFAVSGLAFFLF). Disordered stretches follow at residues 113–149 (AGGA…VDEN), 161–223 (KEGD…SLDS), 250–404 (AYAR…DQQA), 451–474 (RKTK…GRSN), 677–702 (GSLA…REER), and 834–906 (LQQQ…SDEE). The segment covering 114–128 (GGAGQHYGGAQGGAL) has biased composition (gly residues). Over residues 174–185 (SRRPPQPPPPRP) the composition is skewed to pro residues. The span at 186–196 (YRAERRQDAHE) shows a compositional bias: basic and acidic residues. A compositionally biased stretch (pro residues) spans 270–294 (SPSPAPAPAARPASPSPSLPLPPGR). Over residues 295–310 (ESPSRPQSIAAAAVAS) the composition is skewed to low complexity. Pro residues predominate over residues 311–383 (PAPPPPPPPK…KGGPPPPPPK (73 aa)). The FH2 domain maps to 396–849 (PTGSADQQAK…PTPPPSSSQP (454 aa)). 2 stretches are compositionally biased toward polar residues: residues 463–474 (GGSTSAGLGRSN) and 677–697 (GSLA…SQGP). Low complexity predominate over residues 847-866 (SQPAAPAATTKGAADDAPAP).

This sequence belongs to the formin-like family. Class-I subfamily.

The protein resides in the membrane. The sequence is that of Formin-like protein 16 (FH16) from Oryza sativa subsp. japonica (Rice).